We begin with the raw amino-acid sequence, 302 residues long: Recombination-associated protein RdgC (302 aa).

It belongs to the RdgC family.

The protein localises to the cytoplasm. It localises to the nucleoid. Its function is as follows. May be involved in recombination. This Proteus mirabilis (strain HI4320) protein is Recombination-associated protein RdgC.